The primary structure comprises 837 residues: MTTPKLDRRQVLKLEAAAMAALAGGIAMPAAAANLVTERAVSELKWDKAACRFCGTGCSVMVATKENRVVATHGDTKSEVNRGLNCVKGYFLSKIMYGHDRLTQPMLRKTDGKYDKNGEFMPVSWDEAFDIMAEKFKAALKKRGPSGVGMFGSGQWTVWEGYAASKLFKAGFRSNNIDPNARHCMASAVAGFMRTFGIDEPMGCYDDIEAADVFVLWGSNMAEMHPLLWTRVTDRRLSAPHVKVAVLSTFEHRSFDLADLGLVFKPQTDLAILNAIANHIIKTGRVNKDFVAKHTTFKRGQTDIGYGLRPEHPLQKAATGAAKANDATDMSFEDYAAFVADYTIEKASQISGVPAAKIEALAELYADPNTKVTSFWTMGFNQHTRGVWANNLAYNLHLLTGKISEPGNSPFSLTGQPSACGTAREVGTFSHRLPADMVVTNKKHRDIAEKIWKLPEGTIPDKPGYHAVLQSRMLKDGLLNAYWVQVNNNLQAGANANEETYPGFRNPDNFIVVSDAYPSVTALAADLILPTAMWVEKEGAYGNAERRTQFWHQLVSAPGQARSDLWQLMEFAKRFKIEEVWTEELLAKKPEVRGKTMYDVLYRNGQVDKYPSSDIEAGYLNDESKAFGYYVQKGLFEEYASFGRGHGHDLAPFDDYHRERGLRWPVVNGQETRWRFREGSDPYVQQGAGVQFYGFPDGRARIFALPYEPAAEAPDAEFPFWLSTGRVLEHWHSGTMTRRVPELYKAFPEAVCFMHPDDAAELKLRRGDEIKVESRRGFIRTRVETRGRNKPPRGLVFVPWFDEAQLINKVTLDATDPISLQTDYKKCAVRIERVTAS.

The tat-type signal signal peptide spans 1–33 (MTTPKLDRRQVLKLEAAAMAALAGGIAMPAAAA). In terms of domain architecture, 4Fe-4S Mo/W bis-MGD-type spans 44–100 (LKWDKAACRFCGTGCSVMVATKENRVVATHGDTKSEVNRGLNCVKGYFLSKIMYGHD). Residues C51, C54, C58, and C86 each contribute to the [4Fe-4S] cluster site. Mo-bis(molybdopterin guanine dinucleotide)-binding positions include K88, Q155, N180, C184, 217 to 224 (WGSNMAEM), 248 to 252 (STFEH), 267 to 269 (QTD), M378, Q382, N488, 514 to 515 (SD), K537, D564, and 724 to 733 (TGRVLEHWHS). Residue W800 participates in substrate binding. The Mo-bis(molybdopterin guanine dinucleotide) site is built by N808 and K825.

Belongs to the prokaryotic molybdopterin-containing oxidoreductase family. NasA/NapA/NarB subfamily. In terms of assembly, component of the periplasmic nitrate reductase NapAB complex composed of NapA and NapB. [4Fe-4S] cluster serves as cofactor. The cofactor is Mo-bis(molybdopterin guanine dinucleotide). In terms of processing, predicted to be exported by the Tat system. The position of the signal peptide cleavage has not been experimentally proven.

It localises to the periplasm. It catalyses the reaction 2 Fe(II)-[cytochrome] + nitrate + 2 H(+) = 2 Fe(III)-[cytochrome] + nitrite + H2O. Functionally, catalytic subunit of the periplasmic nitrate reductase complex NapAB. Receives electrons from NapB and catalyzes the reduction of nitrate to nitrite. This chain is Periplasmic nitrate reductase, found in Rhodopseudomonas palustris (strain BisB18).